The chain runs to 176 residues: 3-hydroxydecanoyl-[acyl-carrier-protein] dehydratase (176 aa).

Residue His-70 is part of the active site.

The protein belongs to the thioester dehydratase family. FabA subfamily. As to quaternary structure, homodimer.

It is found in the cytoplasm. It carries out the reaction a (3R)-hydroxyacyl-[ACP] = a (2E)-enoyl-[ACP] + H2O. The enzyme catalyses (3R)-hydroxydecanoyl-[ACP] = (2E)-decenoyl-[ACP] + H2O. It catalyses the reaction (2E)-decenoyl-[ACP] = (3Z)-decenoyl-[ACP]. It functions in the pathway lipid metabolism; fatty acid biosynthesis. Functionally, necessary for the introduction of cis unsaturation into fatty acids. Catalyzes the dehydration of (3R)-3-hydroxydecanoyl-ACP to E-(2)-decenoyl-ACP and then its isomerization to Z-(3)-decenoyl-ACP. Can catalyze the dehydratase reaction for beta-hydroxyacyl-ACPs with saturated chain lengths up to 16:0, being most active on intermediate chain length. This chain is 3-hydroxydecanoyl-[acyl-carrier-protein] dehydratase, found in Alkalilimnicola ehrlichii (strain ATCC BAA-1101 / DSM 17681 / MLHE-1).